Reading from the N-terminus, the 181-residue chain is Acetolactate synthase small subunit (181 aa).

Residues 4-78 enclose the ACT domain; that stretch reads TLSVLVEDES…NVLKIQDITN (75 aa).

Belongs to the acetolactate synthase small subunit family. In terms of assembly, dimer of large and small chains.

The protein localises to the plastid. It localises to the chloroplast. It carries out the reaction 2 pyruvate + H(+) = (2S)-2-acetolactate + CO2. It functions in the pathway amino-acid biosynthesis; L-isoleucine biosynthesis; L-isoleucine from 2-oxobutanoate: step 1/4. It participates in amino-acid biosynthesis; L-valine biosynthesis; L-valine from pyruvate: step 1/4. This Galdieria sulphuraria (Red alga) protein is Acetolactate synthase small subunit (ilvH).